A 1909-amino-acid chain; its full sequence is DENN domain-containing protein 4C (1909 aa).

An MABP domain is found at 40–199 (KAPITDIAII…SVFLCYKKSV (160 aa)). Residues 191-364 (VFLCYKKSVP…NIPFPSPQRP (174 aa)) form the uDENN domain. Residues 385–521 (PLPLSGANFS…PCKNLLSTLK (137 aa)) form the cDENN domain. Residues 523 to 641 (LYPQLSSVHQ…CSFVSDKDTG (119 aa)) enclose the dDENN domain. Residues Ser703, Ser737, and Ser741 each carry the phosphoserine modification. One copy of the PPR repeat lies at 821–855 (VCYRVVMQLCGLWGHPVLAVRVLFEMKTARIKPNA). Residues Glu953, Ser965, Ser968, and Ser973 each carry the phosphoserine modification. Thr975 is subject to Phosphothreonine. Residues Ser989, Ser996, Ser1003, Ser1046, Ser1061, Ser1099, Ser1126, Ser1184, Ser1225, Ser1244, Ser1252, and Ser1278 each carry the phosphoserine modification. Disordered stretches follow at residues 1243–1263 (KSPL…NRES) and 1277–1338 (SSLP…HGSL). The segment covering 1296–1316 (SSPAVSRSKTFTGRFKQQTPS) has biased composition (polar residues). 3 positions are modified to phosphoserine: Ser1325, Ser1337, and Ser1346. Positions 1419–1474 (SGLVPSELTQSNTSLGSSSSSGDVGKLHYPTGEVPFPRGMKGQDFEKSDHGSSQNT) are disordered. Positions 1426–1440 (LTQSNTSLGSSSSSG) are enriched in low complexity. A compositionally biased stretch (basic and acidic residues) spans 1459 to 1468 (KGQDFEKSDH). Residues Ser1623, Ser1627, Ser1629, Ser1640, and Ser1799 each carry the phosphoserine modification.

Post-translationally, phosphorylated in response to insulin.

It localises to the cytoplasmic vesicle membrane. The protein localises to the cell membrane. The protein resides in the cytoplasm. It is found in the cytosol. Its function is as follows. Guanine nucleotide exchange factor (GEF) activating RAB10. Promotes the exchange of GDP to GTP, converting inactive GDP-bound RAB10 into its active GTP-bound form. Thereby, stimulates SLC2A4/GLUT4 glucose transporter-enriched vesicles delivery to the plasma membrane in response to insulin. The polypeptide is DENN domain-containing protein 4C (DENND4C) (Homo sapiens (Human)).